We begin with the raw amino-acid sequence, 287 residues long: L-ascorbate peroxidase 3 (287 aa).

The residue at position 2 (Ala-2) is an N-acetylalanine. The active-site Proton acceptor is His-40. The disordered stretch occupies residues 46–66 (DAQSKTGGPNGSIRNEEEHTH). Position 160 (His-160) interacts with heme b. K(+) contacts are provided by Thr-161, Thr-177, and Asp-184. Residues 259–279 (ILAQSAFGVAVAAAVVAFGYF) traverse the membrane as a helical segment. Residues 281 to 287 (EIRKRMK) carry the AKR2A-binding sequence (ABS) required for peroxisome membrane targeting motif.

This sequence belongs to the peroxidase family. Ascorbate peroxidase subfamily. Interacts via its C-terminal region with AKR2A and AKR2B. Heme b is required as a cofactor.

It is found in the peroxisome membrane. It localises to the glyoxysome membrane. It catalyses the reaction L-ascorbate + H2O2 = L-dehydroascorbate + 2 H2O. Functionally, plays a key role in hydrogen peroxide removal. The polypeptide is L-ascorbate peroxidase 3 (APX3) (Arabidopsis thaliana (Mouse-ear cress)).